The following is a 257-amino-acid chain: Zinc transporter ZupT (257 aa).

3 consecutive transmembrane segments (helical) span residues 5–25 (LILT…GVLG), 32–52 (LLAF…LMEM), and 61–81 (GMSP…YFGL). Fe(2+)-binding residues include Asn-120 and Glu-123. The Zn(2+) site is built by Glu-123 and His-148. 4 helical membrane-spanning segments follow: residues 137 to 157 (LGFG…LAVA), 171 to 191 (ILWA…AWLI), 195 to 215 (MISP…MVAL), and 236 to 256 (GVLC…TAGI). Fe(2+)-binding residues include Asn-149, Glu-152, and Glu-181. Position 152 (Glu-152) interacts with Zn(2+).

Belongs to the ZIP transporter (TC 2.A.5) family. ZupT subfamily.

The protein localises to the cell inner membrane. It carries out the reaction Zn(2+)(in) = Zn(2+)(out). In terms of biological role, mediates zinc uptake. May also transport other divalent cations. The chain is Zinc transporter ZupT from Escherichia coli O127:H6 (strain E2348/69 / EPEC).